We begin with the raw amino-acid sequence, 547 residues long: Chaperonin GroEL (547 aa).

ATP contacts are provided by residues 30-33 (TLGP), K51, 87-91 (DGTTT), G415, 479-481 (NAA), and D495.

The protein belongs to the chaperonin (HSP60) family. Forms a cylinder of 14 subunits composed of two heptameric rings stacked back-to-back. Interacts with the co-chaperonin GroES.

Its subcellular location is the cytoplasm. It catalyses the reaction ATP + H2O + a folded polypeptide = ADP + phosphate + an unfolded polypeptide.. In terms of biological role, together with its co-chaperonin GroES, plays an essential role in assisting protein folding. The GroEL-GroES system forms a nano-cage that allows encapsulation of the non-native substrate proteins and provides a physical environment optimized to promote and accelerate protein folding. The protein is Chaperonin GroEL of Pseudomonas savastanoi pv. phaseolicola (strain 1448A / Race 6) (Pseudomonas syringae pv. phaseolicola (strain 1448A / Race 6)).